Reading from the N-terminus, the 344-residue chain is MTDCWYIPEAVADRRDENRLSPNVPASYEVLGEVGIFYRHFDPKEVSDDIEGFIQPLLKKLNYQSYDVVNLSPANLGAEKFETLAEQHFMEHIHEDDEVRLILEGQGYFDVRDINDKWIRLLSKPGDCIVVPAGMYHRFTTDQSKDIKTLRIFKEAPRWIALNRGPEAEEKPARKEYLARLHAPAETAVGAANGRTIFSLRYPLKLDVELTAITKRLLEQHSKRPLALAIYLTGSTDPTTGESWCPDCVLAKPHVATRFAELRGKYGEERAIFLQLPVERASYLGNPNFPYRTHPTLQLASVPTLLVLTPAKDAKEKGDVQWHDLLDVKVRTCDADKADVLSLE.

The Fe(2+) site is built by H92, H94, E98, and H137. Ni(2+)-binding residues include H92, H94, E98, and H137.

It belongs to the acireductone dioxygenase (ARD) family. Fe(2+) is required as a cofactor. Requires Ni(2+) as cofactor.

It is found in the cytoplasm. The protein localises to the nucleus. It carries out the reaction 1,2-dihydroxy-5-(methylsulfanyl)pent-1-en-3-one + O2 = 4-methylsulfanyl-2-oxobutanoate + formate + 2 H(+). The catalysed reaction is 1,2-dihydroxy-5-(methylsulfanyl)pent-1-en-3-one + O2 = 3-(methylsulfanyl)propanoate + CO + formate + 2 H(+). Its pathway is amino-acid biosynthesis; L-methionine biosynthesis via salvage pathway; L-methionine from S-methyl-5-thio-alpha-D-ribose 1-phosphate: step 5/6. Functionally, catalyzes 2 different reactions between oxygen and the acireductone 1,2-dihydroxy-3-keto-5-methylthiopentene (DHK-MTPene) depending upon the metal bound in the active site. Fe-containing acireductone dioxygenase (Fe-ARD) produces formate and 2-keto-4-methylthiobutyrate (KMTB), the alpha-ketoacid precursor of methionine in the methionine recycle pathway. Ni-containing acireductone dioxygenase (Ni-ARD) produces methylthiopropionate, carbon monoxide and formate, and does not lie on the methionine recycle pathway. In Leishmania infantum, this protein is Acireductone dioxygenase.